The sequence spans 423 residues: MPVTAIVGGQWGDEGKGKVVDMLAQEADYVVRFSGGDNAGHTVINPMGEFKLHIIPSGVFYPGVKCIIGNGVVINPDVFIRERNELISRGVDVKNVFISDRAHLVLPYHILLDGLEEEARGNKSLGTTRRGIGPAFVDKYARMGIRVGDLLLPEYLHERLEYVLECKNQILTKVYDAAPISLDEIYETCLKWGKELAPNIKETTHIIEEAISQDKKIIMEGAQGALLDPDFGTYPYGTSSSPLAAGGCLGIGIGPASVSATLGVFKAYSTRVGGGPMPTELLDKTGDIIRDEAHEYGTTTGRPRRIGWFDAVAGRFSCQINGMTTAIMTRLDIMDILPAISICTAYELNGKIIKYFPANSGELAKCKPVYEEMPGWLCSTKEVRCYDDLPLAAKNYICRIEELIGCQMSAVCIGPSREQTIYK.

GTP-binding positions include 12 to 18 and 40 to 42; these read GDEGKGK and GHT. Catalysis depends on Asp-13, which acts as the Proton acceptor. Residues Asp-13 and Gly-40 each coordinate Mg(2+). Residues 13–16, 38–41, Thr-128, Arg-142, Gln-223, Thr-238, and Arg-302 contribute to the IMP site; these read DEGK and NAGH. Residue His-41 is the Proton donor of the active site. A substrate-binding site is contributed by 298 to 304; that stretch reads TTTGRPR. Residues Arg-304, 330–332, and 412–414 contribute to the GTP site; these read RLD and CIG.

The protein belongs to the adenylosuccinate synthetase family. Homodimer. The cofactor is Mg(2+).

The protein localises to the cytoplasm. The catalysed reaction is IMP + L-aspartate + GTP = N(6)-(1,2-dicarboxyethyl)-AMP + GDP + phosphate + 2 H(+). It functions in the pathway purine metabolism; AMP biosynthesis via de novo pathway; AMP from IMP: step 1/2. Its function is as follows. Plays an important role in the de novo pathway of purine nucleotide biosynthesis. Catalyzes the first committed step in the biosynthesis of AMP from IMP. The protein is Adenylosuccinate synthetase of Dehalococcoides mccartyi (strain ATCC BAA-2266 / KCTC 15142 / 195) (Dehalococcoides ethenogenes (strain 195)).